We begin with the raw amino-acid sequence, 747 residues long: MTTKKFTPTITRGPRLTPGEISLTPPDDLGIDIPPSGVQKILPYVMGGAMLGMIAIMVAGGTRQLSPYMLMMPLMMIVMMVGGLAGSTGGGGKKVPEINADRKEYLRYLAGLRTRVTSSATSQVAFFSYHAPHPEDLLSIVGTQRQWSRPANADFYAATRIGIGDQPAVDRLLKPAVGGELAAASAAPQPFLEPVSHMWVVKFLRTHGLIHDCPKLLQLRTFPTIAIGGDLAGAAGLMTAMICHLAVFHPPDLLQIRVLTEEPDDPDWSWLKWLPHVQHQTETDAAGSTRLIFTRQEGLSDLAARGPHAPDSLPGGPYVVVVDLTGGKAGFPPDGRAGVTVITLGNHRGSAYRIRVHEDGTADDRLPNQSFRQVTSVTDRMSPQQASRIARKLAGWSITGTILDKTSRVQKKVATDWHQLVGAQSVEEITPSRWRMYTDTDRDRLKIPFGHELKTGNVMYLDIKEGAEFGAGPHGMLIGTTGSGKSEFLRTLILSLVAMTHPDQVNLLLTDFKGGSTFLGMEKLPHTAAVVTNMAEEAELVSRMGEVLTGELDRRQSILRQAGMKVGAAGALSGVAEYEKYRERGADLPPLPTLFVVVDEFAELLQSHPDFIGLFDRICRVGRSLRVHLLLATQSLQTGGVRIDKLEPNLTYRIALRTTSSHESKAVIGTPEAQYITNKESGVGFLRVGMEDPVKFSTFYISGPYMPPAAGVETNGEAGGPGQQTTRQAARIHRFTAAPVLEEAPTP.

3 helical membrane-spanning segments follow: residues 41-61 (ILPY…VAGG), 65-85 (LSPY…GGLA), and 222-242 (FPTI…TAMI). Residues 456–665 (GNVMYLDIKE…LRTTSSHESK (210 aa)) form the FtsK domain. 479–486 (GTTGSGKS) lines the ATP pocket.

In terms of assembly, part of the ESX-1 / type VII secretion system (T7SS), which is composed of cytosolic and membrane components. The ESX-1 membrane complex is composed of EccB1, EccCa1, EccCb1, EccD1 and EccE1.

The protein localises to the cell inner membrane. Its function is as follows. Part of the ESX-1 specialized secretion system, which delivers several virulence factors to host cells during infection, including the key virulence factors EsxA (ESAT-6) and EsxB (CFP-10). In Mycobacterium tuberculosis (strain CDC 1551 / Oshkosh), this protein is ESX-1 secretion system protein EccCa1.